The sequence spans 517 residues: 2-isopropylmalate synthase (517 aa).

The region spanning 5–268 (IIIFDTTLRD…DTRINTQEIH (264 aa)) is the Pyruvate carboxyltransferase domain. Mn(2+) is bound by residues Asp14, His202, His204, and Asn238. Positions 393 to 517 (SLDVITSQTI…ADLKSHKISQ (125 aa)) are regulatory domain.

Belongs to the alpha-IPM synthase/homocitrate synthase family. LeuA type 1 subfamily. As to quaternary structure, homodimer. Mn(2+) is required as a cofactor.

It is found in the cytoplasm. The enzyme catalyses 3-methyl-2-oxobutanoate + acetyl-CoA + H2O = (2S)-2-isopropylmalate + CoA + H(+). Its pathway is amino-acid biosynthesis; L-leucine biosynthesis; L-leucine from 3-methyl-2-oxobutanoate: step 1/4. In terms of biological role, catalyzes the condensation of the acetyl group of acetyl-CoA with 3-methyl-2-oxobutanoate (2-ketoisovalerate) to form 3-carboxy-3-hydroxy-4-methylpentanoate (2-isopropylmalate). This chain is 2-isopropylmalate synthase, found in Histophilus somni (strain 129Pt) (Haemophilus somnus).